An 85-amino-acid polypeptide reads, in one-letter code: Large ribosomal subunit protein bL27 (85 aa).

The disordered stretch occupies residues M1–R20. Polar residues predominate over residues A7–Q19.

It belongs to the bacterial ribosomal protein bL27 family.

The chain is Large ribosomal subunit protein bL27 from Kineococcus radiotolerans (strain ATCC BAA-149 / DSM 14245 / SRS30216).